A 568-amino-acid chain; its full sequence is MTTQSEYDYIIIGAGSAGNTLAARLTEDAGVTVLLLEAGGPDYRLDFRTQMPAALAFPLQGRRYNWAYETEPEPHMNNRRMECGRGKGLGGSSLINGMCYIRGNAMDYDGWAKEPGLEDWSYLDCLPYFRKAETRDIGPNDYHGGEGPVSVTTPKAGNNPLFHAMVEAGVQAGFPRTDDLNGYQQEGFGPMDRTVTPNGRRASTARGYLDEAKKRSTLTIVTHALTDRILFEGKRAVGVAYLVGDSDTRIQARARKEVLLCGGAIASPQILQRSGVGPAEVLNKLDIPVVHDLPGVGQNLQDHLEMYLQYACTQPVSLYPSLKWWNQPAIGAEWMFLGTGIGASNQFEAGGFIRSSEAFEWPNIQYHFLPVAINYNGTKGVQEHGFQAHVGSMRSPSRGRVQVKSKDPREYPSILFNYMASEQDWQEFRDGIRLTREIMQQPALDPYRGREISPGIDVQSDEALDQFVREHAETAYHPSCSCKMGTDEMAVVDGQGRVHGLQSLRVVDASIMPIITTGNLNAPTIMIAEKIADKIRGRQPLPRSTADYFVAGDKPARGKPLREISHQA.

Residue 8-37 (DYIIIGAGSAGNTLAARLTEDAGVTVLLLE) participates in FAD binding. Residue His-477 is the Proton acceptor of the active site.

It belongs to the GMC oxidoreductase family. It depends on FAD as a cofactor.

The catalysed reaction is choline + A = betaine aldehyde + AH2. The enzyme catalyses betaine aldehyde + NAD(+) + H2O = glycine betaine + NADH + 2 H(+). The protein operates within amine and polyamine biosynthesis; betaine biosynthesis via choline pathway; betaine aldehyde from choline (cytochrome c reductase route): step 1/1. In terms of biological role, involved in the biosynthesis of the osmoprotectant glycine betaine. Catalyzes the oxidation of choline to betaine aldehyde and betaine aldehyde to glycine betaine at the same rate. The protein is Oxygen-dependent choline dehydrogenase of Pseudomonas syringae pv. syringae (strain B728a).